A 166-amino-acid chain; its full sequence is Regulatory protein RecX (166 aa).

Belongs to the RecX family.

Its subcellular location is the cytoplasm. Its function is as follows. Modulates RecA activity. The sequence is that of Regulatory protein RecX from Escherichia coli O7:K1 (strain IAI39 / ExPEC).